Consider the following 366-residue polypeptide: Apolipoprotein A-V (366 aa).

The signal sequence occupies residues 1–23; sequence MASMAAVLTWALALLSAFSATQA. Coiled coils occupy residues 54 to 157 and 236 to 262; these read ATLK…VGED and TLKA…RAFA. At Thr-55 the chain carries Phosphothreonine; by FAM20C. Ser-59 carries the phosphoserine modification.

Belongs to the apolipoprotein A1/A4/E family. In terms of assembly, interacts with GPIHBP1. Interacts with SORL1; this interaction leads to APOA5 internalization and sorting either to lysosomes and degradation, or to the trans-Golgi network. Phosphorylated by FAM20C in the extracellular medium. In terms of tissue distribution, liver and plasma.

It localises to the secreted. Its subcellular location is the early endosome. The protein localises to the late endosome. The protein resides in the golgi apparatus. It is found in the trans-Golgi network. Minor apolipoprotein mainly associated with HDL and to a lesser extent with VLDL. May also be associated with chylomicrons. Important determinant of plasma triglyceride (TG) levels by both being a potent stimulator of apo-CII lipoprotein lipase (LPL) TG hydrolysis and an inhibitor of the hepatic VLDL-TG production rate (without affecting the VLDL-apoB production rate). Activates poorly lecithin:cholesterol acyltransferase (LCAT) and does not enhance efflux of cholesterol from macrophages. Binds heparin. The chain is Apolipoprotein A-V (APOA5) from Homo sapiens (Human).